The primary structure comprises 659 residues: Threonine--tRNA ligase (659 aa).

A TGS domain is found at glutamate 3–threonine 64. Residues aspartate 249–proline 555 are catalytic. Zn(2+) is bound by residues cysteine 354, histidine 405, and histidine 532.

The protein belongs to the class-II aminoacyl-tRNA synthetase family. As to quaternary structure, homodimer. Zn(2+) serves as cofactor.

The protein localises to the cytoplasm. The enzyme catalyses tRNA(Thr) + L-threonine + ATP = L-threonyl-tRNA(Thr) + AMP + diphosphate + H(+). Catalyzes the attachment of threonine to tRNA(Thr) in a two-step reaction: L-threonine is first activated by ATP to form Thr-AMP and then transferred to the acceptor end of tRNA(Thr). Also edits incorrectly charged L-seryl-tRNA(Thr). This is Threonine--tRNA ligase from Zymomonas mobilis subsp. mobilis (strain ATCC 31821 / ZM4 / CP4).